Consider the following 971-residue polypeptide: Zinc finger CCCH domain-containing protein 7A (971 aa).

TPR repeat units lie at residues 43–76, 89–122, and 124–156; these read VRNL…ADYA, EKLY…NASN, and KALY…VPQD. Phosphothreonine is present on threonine 210. C3H1-type zinc fingers lie at residues 634-656 and 769-797; these read LCRH…HSLV and PLQF…HSPE. Residues 857 to 881 form a C2H2-type zinc finger; sequence FHCWMCGKNCNSEKQWQGHISSEKH. Residues 906-928 form a C3H1-type 3 zinc finger; it reads ICDRYMNGTCPEGNSCKFAHGNA. The stretch at 924-952 forms a coiled coil; sequence AHGNAELHEWEERRDALKMKLNKARKDHL.

The protein resides in the nucleus. Its function is as follows. May be a specific regulator of miRNA biogenesis. Binds to microRNAs MIR7-1, MIR16-2 and MIR29A hairpins recognizing the 3'-ATA(A/T)-5' motif in the apical loop. This chain is Zinc finger CCCH domain-containing protein 7A (ZC3H7A), found in Homo sapiens (Human).